A 248-amino-acid polypeptide reads, in one-letter code: Trypsin I-P1 (248 aa).

The first 15 residues, 1 to 15, serve as a signal peptide directing secretion; sequence MKFLVLVAFVGVTVA. The propeptide at 16-25 is activation peptide; sequence FPISDEDDDK. A Peptidase S1 domain is found at 26–246; it reads IVGGYSCARS…YVSWIKTTMS (221 aa). Cystine bridges form between cysteine 32/cysteine 162, cysteine 50/cysteine 66, cysteine 134/cysteine 235, cysteine 141/cysteine 208, cysteine 173/cysteine 187, and cysteine 198/cysteine 222. Catalysis depends on histidine 65, which acts as the Charge relay system. 3 residues coordinate Ca(2+): glutamate 77, asparagine 79, and glutamate 87. Residue aspartate 109 is the Charge relay system of the active site. Serine 202 serves as the catalytic Charge relay system.

It belongs to the peptidase S1 family. Ca(2+) serves as cofactor. As to expression, high levels are seen in the pancreas while lower levels are found in the liver, spleen and thymus.

It localises to the secreted. The protein localises to the extracellular space. The enzyme catalyses Preferential cleavage: Arg-|-Xaa, Lys-|-Xaa.. The protein is Trypsin I-P1 of Gallus gallus (Chicken).